A 467-amino-acid polypeptide reads, in one-letter code: Regulatory protein NPR6 (467 aa).

The 85-residue stretch at 27–111 folds into the BTB domain; sequence SDVTFSVEGR…LYSGQVSIVP (85 aa). A C2HC NPR-type zinc finger spans residues 117-131; sequence RSNCGDRGCWHTHCT. Zn(2+) contacts are provided by Cys-120, Cys-125, His-127, and Cys-130. 4 ANK repeats span residues 247 to 276, 277 to 306, 311 to 340, and 344 to 378; these read QKIRRMRRALDSSDVELVKLMVMGEGLNLD, ESLALIYAVENCSREVVKALLELGAADVNY, TGKTALHIAAEMVSPDMVAVLLDHHADPNV, and DGITPLDILRTLTSDFLFKGAIPGLTHIEPNKLRL. The tract at residues 434–467 is disordered; the sequence is RDIGDDNSNQREGMNLHHHHHDPSTMYHHHHHHF. Positions 449–467 are enriched in basic residues; the sequence is LHHHHHDPSTMYHHHHHHF.

The protein belongs to the plant 'ANKYRIN-BTB/POZ' family. 'NOOT-BOP-COCH-like' (NBCL) subfamily. As to quaternary structure, homodimer or heterodimer with BOP2. Interacts with PAN.

The protein resides in the cytoplasm. It localises to the nucleus. It participates in protein modification; protein ubiquitination. In terms of biological role, may act as a substrate-specific adapter of an E3 ubiquitin-protein ligase complex (CUL3-RBX1-BTB) which mediates the ubiquitination and subsequent proteasomal degradation of target proteins. Acts redundantly with BOP2. BOP1/2 promote leaf and floral meristem fate and determinacy in a pathway targeting AP1 and AGL24. BOP1/2 act as transcriptional co-regulators through direct interaction with TGA factors, including PAN, a direct regulator of AP1. Controls lateral organ fate through positive regulation of adaxial-abaxial polarity genes ATHB-14/PHB, YAB1/FIL and YAB3, and through positive regulation of LOB domain-containing genes LOB, LBD6/AS2 and LBD36. Promotes and maintains a developmentally determinate state in leaf cells through the negative regulation of JAG, JGL and class I KNOX genes. Is also involved in nectary development, formation of normal abscission zones (AZs) and suppression of bract formation, probably by regulating the cell wall disorganization. The sequence is that of Regulatory protein NPR6 from Arabidopsis thaliana (Mouse-ear cress).